Here is a 541-residue protein sequence, read N- to C-terminus: Zingiberene synthase (541 aa).

Mg(2+) is bound by residues Asp-295, Asp-299, Asn-439, Ser-443, and Glu-447. The DDXXD motif signature appears at 295–299 (DDIID).

Belongs to the terpene synthase family. The cofactor is Mg(2+). Mn(2+) is required as a cofactor.

It localises to the cytoplasm. It catalyses the reaction (2E,6E)-farnesyl diphosphate = alpha-zingiberene + diphosphate. Its pathway is secondary metabolite biosynthesis; terpenoid biosynthesis. Functionally, sesquiterpene synthase converting farnesyl diphosphate into two major products, zingiberene &gt; beta-sesquiphellandrene, and five minor products, 7-epi-sesquithujene, sesquisabinene A, (E)-alpha-bergamotene, (E)-beta-farnesene and beta-bisabolene. Can also accept geranyl diphosphate as substrate, producing nine monoterpenes, with myrcene, limonene and alpha-terpinolene as the major products. The sequence is that of Zingiberene synthase (TPS1) from Sorghum bicolor (Sorghum).